Reading from the N-terminus, the 93-residue chain is Large ribosomal subunit protein eL31 (93 aa).

This sequence belongs to the eukaryotic ribosomal protein eL31 family.

In Methanosarcina mazei (strain ATCC BAA-159 / DSM 3647 / Goe1 / Go1 / JCM 11833 / OCM 88) (Methanosarcina frisia), this protein is Large ribosomal subunit protein eL31.